A 339-amino-acid chain; its full sequence is DNA-directed RNA polymerase subunit alpha (339 aa).

The interval 1–233 (MVREEVAGST…DLFLPFLHAE (233 aa)) is alpha N-terminal domain (alpha-NTD). The tract at residues 264-339 (KKGIPLNSIF…IDLLKNKLSF (76 aa)) is alpha C-terminal domain (alpha-CTD).

Belongs to the RNA polymerase alpha chain family. In plastids the minimal PEP RNA polymerase catalytic core is composed of four subunits: alpha, beta, beta', and beta''. When a (nuclear-encoded) sigma factor is associated with the core the holoenzyme is formed, which can initiate transcription.

Its subcellular location is the plastid. It is found in the chloroplast. It catalyses the reaction RNA(n) + a ribonucleoside 5'-triphosphate = RNA(n+1) + diphosphate. Its function is as follows. DNA-dependent RNA polymerase catalyzes the transcription of DNA into RNA using the four ribonucleoside triphosphates as substrates. This chain is DNA-directed RNA polymerase subunit alpha, found in Aegilops tauschii (Tausch's goatgrass).